Consider the following 286-residue polypeptide: Bifunctional protein FolD (286 aa).

Residues 164–166 (GRS), serine 193, and isoleucine 234 each bind NADP(+).

It belongs to the tetrahydrofolate dehydrogenase/cyclohydrolase family. Homodimer.

It carries out the reaction (6R)-5,10-methylene-5,6,7,8-tetrahydrofolate + NADP(+) = (6R)-5,10-methenyltetrahydrofolate + NADPH. It catalyses the reaction (6R)-5,10-methenyltetrahydrofolate + H2O = (6R)-10-formyltetrahydrofolate + H(+). The protein operates within one-carbon metabolism; tetrahydrofolate interconversion. In terms of biological role, catalyzes the oxidation of 5,10-methylenetetrahydrofolate to 5,10-methenyltetrahydrofolate and then the hydrolysis of 5,10-methenyltetrahydrofolate to 10-formyltetrahydrofolate. This is Bifunctional protein FolD from Oleidesulfovibrio alaskensis (strain ATCC BAA-1058 / DSM 17464 / G20) (Desulfovibrio alaskensis).